The sequence spans 163 residues: Crossover junction endodeoxyribonuclease RuvC (163 aa).

Catalysis depends on residues Asp-9, Glu-76, and Asp-148. Mg(2+) contacts are provided by Asp-9, Glu-76, and Asp-148.

Belongs to the RuvC family. In terms of assembly, homodimer which binds Holliday junction (HJ) DNA. The HJ becomes 2-fold symmetrical on binding to RuvC with unstacked arms; it has a different conformation from HJ DNA in complex with RuvA. In the full resolvosome a probable DNA-RuvA(4)-RuvB(12)-RuvC(2) complex forms which resolves the HJ. Mg(2+) is required as a cofactor.

The protein resides in the cytoplasm. The enzyme catalyses Endonucleolytic cleavage at a junction such as a reciprocal single-stranded crossover between two homologous DNA duplexes (Holliday junction).. Functionally, the RuvA-RuvB-RuvC complex processes Holliday junction (HJ) DNA during genetic recombination and DNA repair. Endonuclease that resolves HJ intermediates. Cleaves cruciform DNA by making single-stranded nicks across the HJ at symmetrical positions within the homologous arms, yielding a 5'-phosphate and a 3'-hydroxyl group; requires a central core of homology in the junction. The consensus cleavage sequence is 5'-(A/T)TT(C/G)-3'. Cleavage occurs on the 3'-side of the TT dinucleotide at the point of strand exchange. HJ branch migration catalyzed by RuvA-RuvB allows RuvC to scan DNA until it finds its consensus sequence, where it cleaves and resolves the cruciform DNA. This Trichodesmium erythraeum (strain IMS101) protein is Crossover junction endodeoxyribonuclease RuvC.